A 131-amino-acid polypeptide reads, in one-letter code: Classical arabinogalactan protein 1 (131 aa).

The N-terminal stretch at Met1 to Ala22 is a signal peptide. The segment at Ala22 to Val110 is disordered. Pro residues predominate over residues Ala50–Ser60. Over residues Pro61–Ser72 the composition is skewed to low complexity. The GPI-anchor amidated glycine moiety is linked to residue Gly108. A propeptide spans Ala109–Ile131 (removed in mature form).

The protein belongs to the classical AGP family. O-glycosylated on the hydroxyproline residues. As to expression, predominantly expressed in flowers and at a lower level in roots and leaves.

It localises to the cell membrane. In terms of biological role, proteoglycan that seems to be implicated in diverse developmental roles such as differentiation, cell-cell recognition, embryogenesis and programmed cell death. This chain is Classical arabinogalactan protein 1 (AGP1), found in Arabidopsis thaliana (Mouse-ear cress).